The following is a 238-amino-acid chain: MAVLIPAAGGGRRLGGRPKQFRALGEHPVLVQVLLSFERHPAVGHAVVAAPESRVTDVTDRLQAEGLSVLTAVVGGGADRQSSVQHALRAVPDPVNTVLVHDAARPFVAAAQVQAVVQAVRTGGAASLVVPVADTLRRGDADRLGETVSRDGLYRMQTPQGFRREWLEHAHRRASAEDLAATDDVALVQHLDHDVAPVPGSRRNFKITTPDDWALAQALWPTWRDAPERFDLSSSASS.

This sequence belongs to the IspD/TarI cytidylyltransferase family. IspD subfamily.

The enzyme catalyses 2-C-methyl-D-erythritol 4-phosphate + CTP + H(+) = 4-CDP-2-C-methyl-D-erythritol + diphosphate. The protein operates within isoprenoid biosynthesis; isopentenyl diphosphate biosynthesis via DXP pathway; isopentenyl diphosphate from 1-deoxy-D-xylulose 5-phosphate: step 2/6. In terms of biological role, catalyzes the formation of 4-diphosphocytidyl-2-C-methyl-D-erythritol from CTP and 2-C-methyl-D-erythritol 4-phosphate (MEP). The polypeptide is 2-C-methyl-D-erythritol 4-phosphate cytidylyltransferase (Salinibacter ruber (strain DSM 13855 / M31)).